We begin with the raw amino-acid sequence, 475 residues long: UDP-N-acetylmuramate--L-alanine ligase (475 aa).

G112 to T118 is an ATP binding site.

Belongs to the MurCDEF family.

Its subcellular location is the cytoplasm. It carries out the reaction UDP-N-acetyl-alpha-D-muramate + L-alanine + ATP = UDP-N-acetyl-alpha-D-muramoyl-L-alanine + ADP + phosphate + H(+). Its pathway is cell wall biogenesis; peptidoglycan biosynthesis. Cell wall formation. This chain is UDP-N-acetylmuramate--L-alanine ligase, found in Methylobacillus flagellatus (strain ATCC 51484 / DSM 6875 / VKM B-1610 / KT).